The primary structure comprises 600 residues: Putative DNA 3'-5' helicase Rad25 (600 aa).

Positions 253–402 constitute a Helicase ATP-binding domain; that stretch reads VDRFEDASAG…DIYTLVGRPI (150 aa). 266–273 is a binding site for ATP; sequence GPPGSGKT. The DEAH box motif lies at 356–359; that stretch reads DEVH. The region spanning 457–600 is the Helicase C-terminal domain; it reads EIEHLVDQHG…VTESDASHSP (144 aa). A disordered region spans residues 569–600; that stretch reads RGTEEEDHARSRMRHLSTKGVRVTESDASHSP. Basic and acidic residues predominate over residues 590-600; sequence RVTESDASHSP.

It belongs to the helicase family. RAD25/XPB subfamily.

The catalysed reaction is Couples ATP hydrolysis with the unwinding of duplex DNA by translocating in the 3'-5' direction.. It catalyses the reaction ATP + H2O = ADP + phosphate + H(+). The sequence is that of Putative DNA 3'-5' helicase Rad25 from Halobacterium salinarum (strain ATCC 700922 / JCM 11081 / NRC-1) (Halobacterium halobium).